The primary structure comprises 235 residues: Urease accessory protein UreF (235 aa).

This sequence belongs to the UreF family. As to quaternary structure, ureD, UreF and UreG form a complex that acts as a GTP-hydrolysis-dependent molecular chaperone, activating the urease apoprotein by helping to assemble the nickel containing metallocenter of UreC. The UreE protein probably delivers the nickel.

The protein resides in the cytoplasm. Required for maturation of urease via the functional incorporation of the urease nickel metallocenter. The chain is Urease accessory protein UreF from Psychrobacter cryohalolentis (strain ATCC BAA-1226 / DSM 17306 / VKM B-2378 / K5).